The primary structure comprises 341 residues: Protein-glutamate methylesterase/protein-glutamine glutaminase 1 (341 aa).

Positions Lys2–Leu119 constitute a Response regulatory domain. At Asp53 the chain carries 4-aspartylphosphate. Residues Thr146 to Gln331 enclose the CheB-type methylesterase domain. Active-site residues include Ser158, His185, and Asp278.

Belongs to the CheB family. Post-translationally, phosphorylated by CheA. Phosphorylation of the N-terminal regulatory domain activates the methylesterase activity.

It localises to the cytoplasm. The enzyme catalyses [protein]-L-glutamate 5-O-methyl ester + H2O = L-glutamyl-[protein] + methanol + H(+). It catalyses the reaction L-glutaminyl-[protein] + H2O = L-glutamyl-[protein] + NH4(+). Involved in chemotaxis. Part of a chemotaxis signal transduction system that modulates chemotaxis in response to various stimuli. Catalyzes the demethylation of specific methylglutamate residues introduced into the chemoreceptors (methyl-accepting chemotaxis proteins or MCP) by CheR. Also mediates the irreversible deamidation of specific glutamine residues to glutamic acid. In Cupriavidus pinatubonensis (strain JMP 134 / LMG 1197) (Cupriavidus necator (strain JMP 134)), this protein is Protein-glutamate methylesterase/protein-glutamine glutaminase 1.